A 424-amino-acid chain; its full sequence is L-threonine:uridine-5'-aldehyde transaldolase (424 aa).

Position 235 is an N6-(pyridoxal phosphate)lysine (K235).

This sequence belongs to the SHMT family. Requires pyridoxal 5'-phosphate as cofactor.

The catalysed reaction is uridine-5'-aldehyde + L-threonine = (5'S,6'S)-C-glycyluridine + acetaldehyde. It functions in the pathway antibiotic biosynthesis. In terms of biological role, transaldolase involved in the biosynthesis of the lipopeptidyl nucleoside antibiotic A-90289. Catalyzes the condensation of L-threonine and uridine-5'-aldehyde to form 5'-C-glycyluridine (GlyU). Forms (5'S,6'S)-GlyU. Has no activity with alternative amino acids, such as glycine or serine. The protein is L-threonine:uridine-5'-aldehyde transaldolase of Streptomyces sp.